A 782-amino-acid chain; its full sequence is Transcription factor SOX-30 (782 aa).

Disordered stretches follow at residues 1–37 (MERA…AQPV), 95–117 (LPPG…AAAA), and 139–226 (PPQS…DALK). 2 stretches are compositionally biased toward pro residues: residues 7 to 35 (EPPP…PPAQ) and 97 to 106 (PGGPGVPPAP). Basic and acidic residues predominate over residues 203–226 (LDGRRSDEKKAKLEAEEAPRDALK). The segment at residues 366–434 (VKRPMNAFMV…KHREEFPGWV (69 aa)) is a DNA-binding region (HMG box). Disordered regions lie at residues 501–604 (PTPA…STCP), 704–724 (YPDE…DGPP), and 756–782 (ASAP…LRNL). Positions 512-522 (TLFQPSVSSTG) are enriched in polar residues. Residues 525–538 (AVPPPSLTPRPSLP) show a composition bias toward pro residues. The segment covering 555–574 (SGSSRSVKRSTPGSLESTTR) has biased composition (polar residues). Residues 704 to 718 (YPDEHTHSEDSRSCE) show a composition bias toward basic and acidic residues.

As to quaternary structure, interacts with CTNNB1, competitively inhibiting CTNNB1-TCF7L2/TCF4 interaction. Expressed in the lung (at protein level). Expressed in testes (at protein level). Expressed in preleptotene spermatocytes, round spermatids, and elongated spermatids in the testis (at protein level). Expressed in pachytene spermatocytes during stages 3 to 8 of spermatogenesis (at protein level). Increased expression in diplotene spermatocytes at stage 9-11 and in metaphase spermatocytes or secondary spermatocytes at stage 12. Expressed in ovaries.

It localises to the nucleus. The protein resides in the cytoplasm. Acts both as a transcriptional activator and a repressor. Binds to the DNA sequence 5'-ACAAT-3' and shows a preference for guanine residues surrounding this core motif. Binds to its own promoter and activates its own transcription. Required to activate the expression of postmeiotic genes involved in spermiogenesis. Binds to the promoter region of CTNNB1 and represses its transcription which leads to inhibition of Wnt signaling. Also inhibits Wnt signaling by binding to the CTNNB1 protein, preventing interaction of CTNNB1 with TCF7L2/TCF4. The protein is Transcription factor SOX-30 (Sox30) of Mus musculus (Mouse).